The following is a 182-amino-acid chain: UPF0397 protein SPT_0523 (182 aa).

The next 5 membrane-spanning stretches (helical) occupy residues 10-30 (VVAVGIGAALFVVIGMINIPT), 46-66 (LLSIIFGPIIGLLVGLIGHAI), 73-93 (YGLWWTWIIASGLFGLVVGLF), 109-129 (ILIFNLIQLLANALVWGVLAP), and 148-168 (IVAGIANGVSVAIAGTLLLLA).

The protein belongs to the UPF0397 family.

It localises to the cell membrane. The polypeptide is UPF0397 protein SPT_0523 (Streptococcus pneumoniae (strain Taiwan19F-14)).